The primary structure comprises 176 residues: NAD(P)H-quinone oxidoreductase subunit 6, chloroplastic (176 aa).

5 consecutive transmembrane segments (helical) span residues 10–30 (FLLV…VLLP), 32–52 (PIFS…LYIL), 61–81 (AQLL…VMFM), 92–112 (LWTV…FSLM), and 152–172 (FFLP…GAIS).

Belongs to the complex I subunit 6 family. In terms of assembly, NDH is composed of at least 16 different subunits, 5 of which are encoded in the nucleus.

Its subcellular location is the plastid. The protein resides in the chloroplast thylakoid membrane. The enzyme catalyses a plastoquinone + NADH + (n+1) H(+)(in) = a plastoquinol + NAD(+) + n H(+)(out). The catalysed reaction is a plastoquinone + NADPH + (n+1) H(+)(in) = a plastoquinol + NADP(+) + n H(+)(out). Functionally, NDH shuttles electrons from NAD(P)H:plastoquinone, via FMN and iron-sulfur (Fe-S) centers, to quinones in the photosynthetic chain and possibly in a chloroplast respiratory chain. The immediate electron acceptor for the enzyme in this species is believed to be plastoquinone. Couples the redox reaction to proton translocation, and thus conserves the redox energy in a proton gradient. The polypeptide is NAD(P)H-quinone oxidoreductase subunit 6, chloroplastic (ndhG) (Nasturtium officinale (Watercress)).